A 27-amino-acid polypeptide reads, in one-letter code: Ferric reductase B (27 aa).

Homodimer. It depends on FAD as a cofactor.

The enzyme catalyses 2 a Fe(II)-siderophore + NAD(+) + H(+) = 2 a Fe(III)-siderophore + NADH. Its function is as follows. Reductase activity that acts on Fe(3+)-chelates and uses both NADH and NADPH as electron donors. May play a role in iron uptake. This chain is Ferric reductase B (ferB), found in Paracoccus denitrificans.